The sequence spans 189 residues: Probable nicotinate-nucleotide adenylyltransferase (189 aa).

Belongs to the NadD family.

It catalyses the reaction nicotinate beta-D-ribonucleotide + ATP + H(+) = deamido-NAD(+) + diphosphate. It functions in the pathway cofactor biosynthesis; NAD(+) biosynthesis; deamido-NAD(+) from nicotinate D-ribonucleotide: step 1/1. Its function is as follows. Catalyzes the reversible adenylation of nicotinate mononucleotide (NaMN) to nicotinic acid adenine dinucleotide (NaAD). The protein is Probable nicotinate-nucleotide adenylyltransferase of Exiguobacterium sibiricum (strain DSM 17290 / CCUG 55495 / CIP 109462 / JCM 13490 / 255-15).